A 312-amino-acid polypeptide reads, in one-letter code: DNA-directed RNA polymerase subunit alpha (312 aa).

An alpha N-terminal domain (alpha-NTD) region spans residues 1–226 (MIEFEKPKIT…DHLNLFVDLS (226 aa)). The tract at residues 243–312 (TERVLDKIIE…ELGLSLKKRK (70 aa)) is alpha C-terminal domain (alpha-CTD).

The protein belongs to the RNA polymerase alpha chain family. As to quaternary structure, homodimer. The RNAP catalytic core consists of 2 alpha, 1 beta, 1 beta' and 1 omega subunit. When a sigma factor is associated with the core the holoenzyme is formed, which can initiate transcription.

It carries out the reaction RNA(n) + a ribonucleoside 5'-triphosphate = RNA(n+1) + diphosphate. In terms of biological role, DNA-dependent RNA polymerase catalyzes the transcription of DNA into RNA using the four ribonucleoside triphosphates as substrates. The polypeptide is DNA-directed RNA polymerase subunit alpha (Lactococcus lactis subsp. cremoris (strain MG1363)).